The following is a 169-amino-acid chain: E1B protein, small T-antigen (169 aa).

It belongs to the adenoviridae E1B 19 kDa protein family.

In Canine adenovirus serotype 1 (strain CLL) (CAdV-1), this protein is E1B protein, small T-antigen.